Consider the following 525-residue polypeptide: GMP synthase [glutamine-hydrolyzing] (525 aa).

Residues 9 to 207 (RILILDFGSQ…VMDICKCEKL (199 aa)) enclose the Glutamine amidotransferase type-1 domain. The Nucleophile role is filled by Cys86. Residues His181 and Glu183 contribute to the active site. Positions 208–400 (WTAGAIIEDA…LGLPYDMLYR (193 aa)) constitute a GMPS ATP-PPase domain. ATP is bound at residue 235-241 (SGGVDSS).

Homodimer.

The catalysed reaction is XMP + L-glutamine + ATP + H2O = GMP + L-glutamate + AMP + diphosphate + 2 H(+). It functions in the pathway purine metabolism; GMP biosynthesis; GMP from XMP (L-Gln route): step 1/1. In terms of biological role, catalyzes the synthesis of GMP from XMP. The chain is GMP synthase [glutamine-hydrolyzing] from Alteromonas mediterranea (strain DSM 17117 / CIP 110805 / LMG 28347 / Deep ecotype).